Reading from the N-terminus, the 475-residue chain is Bifunctional purple acid phosphatase 26 (475 aa).

The N-terminal stretch at 1-30 is a signal peptide; it reads MNHLVIISVFLSSVLLLYRGESGITSSFIR. The N-linked (GlcNAc...) asparagine glycan is linked to N103. Fe cation contacts are provided by D162, D189, and Y192. Zn(2+) is bound at residue D189. Residues N227 and H312 each coordinate Zn(2+). A substrate-binding site is contributed by N227. H322 serves as the catalytic Proton donor. A Zn(2+)-binding site is contributed by H349. 349 to 351 lines the substrate pocket; that stretch reads HVH. H351 is a Fe cation binding site. N365 and N422 each carry an N-linked (GlcNAc...) asparagine glycan.

Belongs to the metallophosphoesterase superfamily. Purple acid phosphatase family. Homodimer. It depends on Fe cation as a cofactor. Zn(2+) is required as a cofactor. Post-translationally, glycosylated. Expressed in roots, stems, leaves, flowers and siliques.

It localises to the vacuole. The catalysed reaction is a phosphate monoester + H2O = an alcohol + phosphate. It catalyses the reaction 2 a phenolic donor + H2O2 = 2 a phenolic radical donor + 2 H2O. With respect to regulation, activated by Mg(2+), Co(2+), Mn(2+) and Ba(2+). Inhibited by Fe(2+), Cu(2+), Zn(2+), NaF, molybdate, arsenate, vanadate and inorganic phosphate. No effect of tartrate, Asp, Gln, glutathione, Asn, ascorbic acid and phosphite. Functionally, metallo-phosphoesterase involved in phosphate metabolism. Acid phosphatase activity with phosphoenolpyruvate, inorganic pyrophosphate, phenyl-phosphate and p-nitrophenyl-phosphate as the most effective substrates. No activity with phytic acid, phosphocholine or bis-p-nitrophenyl-phosphate. Has a peroxidase activity at alkaline pH. This chain is Bifunctional purple acid phosphatase 26 (PAP26), found in Arabidopsis thaliana (Mouse-ear cress).